The chain runs to 864 residues: Leucine--tRNA ligase (864 aa).

The 'HIGH' region signature appears at 40–51; it reads PYPSGAGLHVGH. Residues 636–640 carry the 'KMSKS' region motif; that stretch reads KMSKS. K639 provides a ligand contact to ATP.

Belongs to the class-I aminoacyl-tRNA synthetase family.

The protein resides in the cytoplasm. The catalysed reaction is tRNA(Leu) + L-leucine + ATP = L-leucyl-tRNA(Leu) + AMP + diphosphate. The sequence is that of Leucine--tRNA ligase from Leptospira borgpetersenii serovar Hardjo-bovis (strain JB197).